The primary structure comprises 432 residues: Glutamate-1-semialdehyde 2,1-aminomutase (432 aa).

Lys272 carries the post-translational modification N6-(pyridoxal phosphate)lysine.

This sequence belongs to the class-III pyridoxal-phosphate-dependent aminotransferase family. HemL subfamily. In terms of assembly, homodimer. Pyridoxal 5'-phosphate serves as cofactor.

Its subcellular location is the cytoplasm. The catalysed reaction is (S)-4-amino-5-oxopentanoate = 5-aminolevulinate. Its pathway is porphyrin-containing compound metabolism; protoporphyrin-IX biosynthesis; 5-aminolevulinate from L-glutamyl-tRNA(Glu): step 2/2. It functions in the pathway porphyrin-containing compound metabolism; chlorophyll biosynthesis. The polypeptide is Glutamate-1-semialdehyde 2,1-aminomutase (Picosynechococcus sp. (strain ATCC 27264 / PCC 7002 / PR-6) (Agmenellum quadruplicatum)).